Consider the following 257-residue polypeptide: NAD-capped RNA hydrolase NudC (257 aa).

Substrate is bound by residues Lys25 and Arg69. Cys98 and Cys101 together coordinate Zn(2+). Glu111 contacts substrate. Cys116 and Cys119 together coordinate Zn(2+). Tyr124 contacts substrate. The Nudix hydrolase domain maps to 125-248 (PQIAPCIIVA…TVARRLIEDT (124 aa)). The a divalent metal cation site is built by Ala158, Glu174, and Glu178. The Nudix box signature appears at 159–180 (GFVEVGETLEQAVAREVMEESG). Residue 192–199 (QPWPFPQS) coordinates substrate. Glu219 provides a ligand contact to a divalent metal cation. Position 241 (Ala241) interacts with substrate.

It belongs to the Nudix hydrolase family. NudC subfamily. As to quaternary structure, homodimer. The cofactor is Mg(2+). Mn(2+) serves as cofactor. Requires Zn(2+) as cofactor.

It catalyses the reaction a 5'-end NAD(+)-phospho-ribonucleoside in mRNA + H2O = a 5'-end phospho-adenosine-phospho-ribonucleoside in mRNA + beta-nicotinamide D-ribonucleotide + 2 H(+). It carries out the reaction NAD(+) + H2O = beta-nicotinamide D-ribonucleotide + AMP + 2 H(+). The enzyme catalyses NADH + H2O = reduced beta-nicotinamide D-ribonucleotide + AMP + 2 H(+). Its function is as follows. mRNA decapping enzyme that specifically removes the nicotinamide adenine dinucleotide (NAD) cap from a subset of mRNAs by hydrolyzing the diphosphate linkage to produce nicotinamide mononucleotide (NMN) and 5' monophosphate mRNA. The NAD-cap is present at the 5'-end of some mRNAs and stabilizes RNA against 5'-processing. Has preference for mRNAs with a 5'-end purine. Catalyzes the hydrolysis of a broad range of dinucleotide pyrophosphates. The sequence is that of NAD-capped RNA hydrolase NudC from Shigella boydii serotype 18 (strain CDC 3083-94 / BS512).